We begin with the raw amino-acid sequence, 305 residues long: L-lactate dehydrogenase (305 aa).

NAD(+)-binding positions include Val-11, Asp-32, Lys-37, and 76 to 77 (GV). Substrate contacts are provided by residues Gln-79, Arg-85, and 117 to 120 (NPVD). NAD(+)-binding positions include 115 to 117 (ATN) and Ser-140. 145 to 148 (DTAR) lines the substrate pocket. Beta-D-fructose 1,6-bisphosphate-binding residues include Arg-150 and His-165. His-172 (proton acceptor) is an active-site residue. At Tyr-218 the chain carries Phosphotyrosine. Thr-227 contributes to the substrate binding site.

It belongs to the LDH/MDH superfamily. LDH family. As to quaternary structure, homotetramer.

It is found in the cytoplasm. It carries out the reaction (S)-lactate + NAD(+) = pyruvate + NADH + H(+). Its pathway is fermentation; pyruvate fermentation to lactate; (S)-lactate from pyruvate: step 1/1. Allosterically activated by fructose 1,6-bisphosphate (FBP). Functionally, catalyzes the conversion of lactate to pyruvate. This Chloroherpeton thalassium (strain ATCC 35110 / GB-78) protein is L-lactate dehydrogenase.